The sequence spans 290 residues: Arginine and glutamate-rich protein 1 (290 aa).

The span at 1-10 (MGSRSRTPSP) shows a compositional bias: polar residues. Disordered regions lie at residues 1 to 137 (MGSR…AKEL), 193 to 216 (ERRREQIREEERRREEDEKQKREE), and 249 to 290 (MDEE…PGAL). Positions 12-28 (GKRRHHKSKHKKRSKSH) are enriched in basic residues. 2 stretches are compositionally biased toward basic and acidic residues: residues 29-44 (HDHERPSTRTDRDKSS) and 53-76 (RERDRDRERDRHRSDRHTERDYRH). Phosphoserine occurs at positions 77 and 79. The span at 88-99 (SSSSSDSQYSEQ) shows a compositional bias: low complexity. Residues 111–269 (FKKLDEQNQM…QEKRVKEEQK (159 aa)) adopt a coiled-coil conformation. The segment covering 124 to 137 (RLAEMERQRRAKEL) has biased composition (basic and acidic residues). The segment covering 249–269 (MDEERQRMRKEQEKRVKEEQK) has biased composition (basic and acidic residues).

Belongs to the ARGLU1 family. Associates with the U1-snRNP complex; the interaction is enhanced by binding of Arglu1 to a stable intronic sequence RNA (sisRNA) produced from the Arglu1 gene by premature cleavage.

Its subcellular location is the nucleus. It localises to the nucleus speckle. Post-transcriptional regulator of gene expression; modulates splicing and premature cleavage at cryptic polyadenylation sites of its own pre-mRNA through binding and regulation of the U1-snRNP complex. The protein is Arginine and glutamate-rich protein 1 of Drosophila melanogaster (Fruit fly).